Reading from the N-terminus, the 390-residue chain is EF-hand calcium-binding domain-containing protein 4A (390 aa).

Over residues methionine 1–proline 27 the composition is skewed to low complexity. The segment at methionine 1–lysine 37 is disordered. EF-hand domains follow at residues aspartate 33–proline 66 and leucine 67–serine 102. Residues aspartate 80, aspartate 82, asparagine 84, tyrosine 86, and glutamate 91 each contribute to the Ca(2+) site. The stretch at serine 173 to lysine 357 forms a coiled coil. Residues aspartate 206–leucine 234 are disordered.

The protein belongs to the EFCAB4 family.

This chain is EF-hand calcium-binding domain-containing protein 4A (cracr2b), found in Danio rerio (Zebrafish).